The sequence spans 137 residues: UPF0146 protein MJ0688 (137 aa).

It belongs to the UPF0146 family.

The sequence is that of UPF0146 protein MJ0688 from Methanocaldococcus jannaschii (strain ATCC 43067 / DSM 2661 / JAL-1 / JCM 10045 / NBRC 100440) (Methanococcus jannaschii).